Reading from the N-terminus, the 489-residue chain is Coronin-1B (489 aa).

Residue serine 2 is modified to Phosphoserine; by PKC. WD repeat units follow at residues 18–72, 73–122, 123–166, 167–210, 211–256, and 257–296; these read QPVK…GRID, KAYP…SPLT, EPVV…GTAE, ELYR…RGTL, VAER…ENLE, and EPMALQELDSSNGALLPFYDPDTSVVYVCGKGDSSIRYFE. A disordered region spans residues 408-444; that stretch reads RRNVLSDSRPAMAPGSSHLGAPASTTTAADATPSGSL. Low complexity predominate over residues 428–441; it reads APASTTTAADATPS. Positions 449–474 form a coiled coil; sequence EAGKLEEVMQELRALRALVKEQGDRI.

The protein belongs to the WD repeat coronin family. Forms homooligomers, but does not form complexes with the other coronins. Interacts with Arp2/3 complex components, including ACTR2, ARPC1B and ARPC2. Binds actin. Post-translationally, phosphorylation by PKC on Ser-2 regulates the interaction with the Arp2/3 complex and cell motility in fibroblasts. Phosphorylation does not seem to affect subcellular location.

The protein localises to the cytoplasm. Its subcellular location is the cytoskeleton. It is found in the stress fiber. Its function is as follows. Regulates leading edge dynamics and cell motility in fibroblasts. May be involved in cytokinesis and signal transduction. This Homo sapiens (Human) protein is Coronin-1B (CORO1B).